The sequence spans 338 residues: 3-keto-steroid reductase erg27 (338 aa).

NADP(+) is bound by residues leucine 16, threonine 44, lysine 50, and aspartate 75. Active-site proton donor residues include serine 180 and tyrosine 203. The NADP(+) site is built by tyrosine 203, lysine 207, and threonine 236. The active-site Lowers pKa of active site Tyr is the lysine 207.

Belongs to the short-chain dehydrogenases/reductases (SDR) family. ERG27 subfamily. Heterotetramer of erg25, erg26, erg27 and erg28. Erg28 acts as a scaffold to tether erg27 and other 4,4-demethylation-related enzymes, forming a demethylation enzyme complex, in the endoplasmic reticulum.

The catalysed reaction is 3-dehydro-4alpha-methylzymosterol + NADPH + H(+) = 4alpha-methylzymosterol + NADP(+). It participates in steroid biosynthesis; zymosterol biosynthesis; zymosterol from lanosterol: step 5/6. Its pathway is steroid metabolism; ergosterol biosynthesis. 3-keto-steroid reductase; part of the third module of ergosterol biosynthesis pathway that includes by the late steps of the pathway. Erg27 is a catalytic component of the C-4 demethylation complex that catalyze the reduction of the keto group on the C-3. The third module or late pathway involves the ergosterol synthesis itself through consecutive reactions that mainly occur in the endoplasmic reticulum (ER) membrane. Firstly, the squalene synthase erg9 catalyzes the condensation of 2 farnesyl pyrophosphate moieties to form squalene, which is the precursor of all steroids. Secondly, squalene is converted into lanosterol by the consecutive action of the squalene epoxidase erg1 and the lanosterol synthase erg7. The lanosterol 14-alpha-demethylase erg11/cyp1 catalyzes C14-demethylation of lanosterol to produce 4,4'-dimethyl cholesta-8,14,24-triene-3-beta-ol. In the next steps, a complex process involving various demethylation, reduction and desaturation reactions catalyzed by the C-14 reductase erg24 and the C-4 demethylation complex erg25-erg26-erg27 leads to the production of zymosterol. Erg28 likely functions in the C-4 demethylation complex reaction by tethering erg26 and Erg27 to the endoplasmic reticulum or to facilitate interaction between these proteins. Then, the sterol 24-C-methyltransferase erg6 catalyzes the methyl transfer from S-adenosyl-methionine to the C-24 of zymosterol to form fecosterol. The C-8 sterol isomerase erg2 catalyzes the reaction which results in unsaturation at C-7 in the B ring of sterols and thus converts fecosterol to episterol. The sterol-C5-desaturases erg31 and erg32 then catalyze the introduction of a C-5 double bond in the B ring to produce 5-dehydroepisterol. The C-22 sterol desaturase erg5 further converts 5-dehydroepisterol into ergosta-5,7,22,24(28)-tetraen-3beta-ol by forming the C-22(23) double bond in the sterol side chain. Finally, ergosta-5,7,22,24(28)-tetraen-3beta-ol is substrate of the C-24(28) sterol reductase erg4 to produce ergosterol. In the genus Schizosaccharomyces, a second route exists between lanosterol and fecosterol, via the methylation of lanosterol to eburicol by erg6, followed by C14-demethylation by erg11/cyp1 and C4-demethylation by the demethylation complex erg25-erg26-erg27. The sequence is that of 3-keto-steroid reductase erg27 from Schizosaccharomyces pombe (strain 972 / ATCC 24843) (Fission yeast).